Reading from the N-terminus, the 245-residue chain is NAD-dependent protein deacetylase (245 aa).

In terms of domain architecture, Deacetylase sirtuin-type spans 1–245 (MIFVQQFEEV…EFVEGLSSIK (245 aa)). 8 residues coordinate NAD(+): Ala-26, Thr-30, Phe-37, Arg-38, Gln-105, Ile-107, Asp-108, and His-123. Phe-37 provides a ligand contact to nicotinamide. Nicotinamide-binding residues include Ile-107 and Asp-108. Residue His-123 is the Proton acceptor of the active site. Positions 131, 134, 151, and 154 each coordinate Zn(2+). NAD(+) is bound by residues Thr-190, Ser-191, Asn-216, and Ile-234.

Belongs to the sirtuin family. Class U subfamily. Requires Zn(2+) as cofactor.

Its subcellular location is the cytoplasm. The enzyme catalyses N(6)-acetyl-L-lysyl-[protein] + NAD(+) + H2O = 2''-O-acetyl-ADP-D-ribose + nicotinamide + L-lysyl-[protein]. Functionally, NAD-dependent protein deacetylase which modulates the activities of several enzymes which are inactive in their acetylated form. The chain is NAD-dependent protein deacetylase from Bacillus thuringiensis subsp. konkukian (strain 97-27).